The primary structure comprises 60 residues: UPF0434 protein YcaR (60 aa).

This sequence belongs to the UPF0434 family.

The chain is UPF0434 protein YcaR from Escherichia fergusonii (strain ATCC 35469 / DSM 13698 / CCUG 18766 / IAM 14443 / JCM 21226 / LMG 7866 / NBRC 102419 / NCTC 12128 / CDC 0568-73).